Here is a 410-residue protein sequence, read N- to C-terminus: MQIYLVGGAVRDTLLGLPVTERDYVVVGSEAQTLLDLGYQPVGRDFPVFLHPQTKEEYALARIERKQGKGYTGFACYAAPDVTLEQDLLRRDLTINAIAQDQDGQLYDPYGGISDLNNRVLRHISPAFSEDPLRVLRVARFAARFHHLGFYIAPETLALMRKLSRSGELNHLTPERIWKEIEKVLSGRNPQIFFEILHDCEALNVLLPEVDALFGIPARPDWHPEVDTGIHVMMALREASQRSEQLAVRFATLCHDLGKAQTPAHILPSHHGHGERGTPLIRELCKRLKVPNDCRDLAILVSELHSLVHTALQLRPATMLKLFDRLDVWRKPERLSQLLLCCQADFYGRQGFAEREYPEPEYVQQAYDAAVAVAVKPIVEAGYTGEAIRLQLSRRRIFAIRDVHCRWNDK.

ATP contacts are provided by Gly-8 and Arg-11. Gly-8 and Arg-11 together coordinate CTP. Glu-21 and Asp-23 together coordinate Mg(2+). Positions 91, 137, and 140 each coordinate ATP. Residues Arg-91, Arg-137, and Arg-140 each coordinate CTP. The HD domain occupies 228–329 (TGIHVMMALR…LKLFDRLDVW (102 aa)).

Belongs to the tRNA nucleotidyltransferase/poly(A) polymerase family. Bacterial CCA-adding enzyme type 1 subfamily. Monomer. Can also form homodimers and oligomers. It depends on Mg(2+) as a cofactor. Requires Ni(2+) as cofactor.

It carries out the reaction a tRNA precursor + 2 CTP + ATP = a tRNA with a 3' CCA end + 3 diphosphate. The catalysed reaction is a tRNA with a 3' CCA end + 2 CTP + ATP = a tRNA with a 3' CCACCA end + 3 diphosphate. Its function is as follows. Catalyzes the addition and repair of the essential 3'-terminal CCA sequence in tRNAs without using a nucleic acid template. Adds these three nucleotides in the order of C, C, and A to the tRNA nucleotide-73, using CTP and ATP as substrates and producing inorganic pyrophosphate. tRNA 3'-terminal CCA addition is required both for tRNA processing and repair. Also involved in tRNA surveillance by mediating tandem CCA addition to generate a CCACCA at the 3' terminus of unstable tRNAs. While stable tRNAs receive only 3'-terminal CCA, unstable tRNAs are marked with CCACCA and rapidly degraded. This chain is Multifunctional CCA protein, found in Tolumonas auensis (strain DSM 9187 / NBRC 110442 / TA 4).